Here is a 204-residue protein sequence, read N- to C-terminus: UPF0637 protein lwe1043 (204 aa).

Belongs to the UPF0637 family.

The sequence is that of UPF0637 protein lwe1043 from Listeria welshimeri serovar 6b (strain ATCC 35897 / DSM 20650 / CCUG 15529 / CIP 8149 / NCTC 11857 / SLCC 5334 / V8).